The primary structure comprises 307 residues: Small ribosomal subunit biogenesis GTPase RsgA (307 aa).

Residues His-78–Leu-240 form the CP-type G domain. Residues Asn-128 to Asp-131 and Gly-182 to Thr-190 each bind GTP. Cys-264, Cys-269, His-271, and Cys-277 together coordinate Zn(2+).

Belongs to the TRAFAC class YlqF/YawG GTPase family. RsgA subfamily. As to quaternary structure, monomer. Associates with 30S ribosomal subunit, binds 16S rRNA. Zn(2+) is required as a cofactor.

The protein resides in the cytoplasm. Its function is as follows. One of several proteins that assist in the late maturation steps of the functional core of the 30S ribosomal subunit. Helps release RbfA from mature subunits. May play a role in the assembly of ribosomal proteins into the subunit. Circularly permuted GTPase that catalyzes slow GTP hydrolysis, GTPase activity is stimulated by the 30S ribosomal subunit. The polypeptide is Small ribosomal subunit biogenesis GTPase RsgA (Cytophaga hutchinsonii (strain ATCC 33406 / DSM 1761 / CIP 103989 / NBRC 15051 / NCIMB 9469 / D465)).